The primary structure comprises 635 residues: 1-deoxy-D-xylulose-5-phosphate synthase (635 aa).

Thiamine diphosphate contacts are provided by residues H72 and 113–115; that span reads GHA. D144 is a Mg(2+) binding site. Residues 145 to 146, N174, Y287, and E370 each bind thiamine diphosphate; that span reads GA. N174 contacts Mg(2+).

Belongs to the transketolase family. DXPS subfamily. In terms of assembly, homodimer. It depends on Mg(2+) as a cofactor. Requires thiamine diphosphate as cofactor.

The enzyme catalyses D-glyceraldehyde 3-phosphate + pyruvate + H(+) = 1-deoxy-D-xylulose 5-phosphate + CO2. The protein operates within metabolic intermediate biosynthesis; 1-deoxy-D-xylulose 5-phosphate biosynthesis; 1-deoxy-D-xylulose 5-phosphate from D-glyceraldehyde 3-phosphate and pyruvate: step 1/1. In terms of biological role, catalyzes the acyloin condensation reaction between C atoms 2 and 3 of pyruvate and glyceraldehyde 3-phosphate to yield 1-deoxy-D-xylulose-5-phosphate (DXP). In Trichodesmium erythraeum (strain IMS101), this protein is 1-deoxy-D-xylulose-5-phosphate synthase.